The sequence spans 316 residues: tRNA dimethylallyltransferase (316 aa).

Residue 13-20 (GPTASGKT) participates in ATP binding. 15 to 20 (TASGKT) lines the substrate pocket. Interaction with substrate tRNA regions lie at residues 38 to 41 (DSAL), 162 to 166 (QRINR), 243 to 248 (RCVGYR), and 276 to 283 (KRQITWLR).

This sequence belongs to the IPP transferase family. As to quaternary structure, monomer. Requires Mg(2+) as cofactor.

The enzyme catalyses adenosine(37) in tRNA + dimethylallyl diphosphate = N(6)-dimethylallyladenosine(37) in tRNA + diphosphate. Functionally, catalyzes the transfer of a dimethylallyl group onto the adenine at position 37 in tRNAs that read codons beginning with uridine, leading to the formation of N6-(dimethylallyl)adenosine (i(6)A). In Pasteurella multocida (strain Pm70), this protein is tRNA dimethylallyltransferase.